The sequence spans 507 residues: Arabinose import ATP-binding protein AraG (507 aa).

2 ABC transporter domains span residues 14–249 and 249–505; these read LRFN…MVGR and RDIQ…LPRT. 46–53 contributes to the ATP binding site; that stretch reads GENGAGKS.

Belongs to the ABC transporter superfamily. Arabinose importer (TC 3.A.1.2.2) family. As to quaternary structure, the complex is composed of two ATP-binding proteins (AraG), two transmembrane proteins (AraH) and a solute-binding protein (AraF).

Its subcellular location is the cell inner membrane. The catalysed reaction is L-arabinose(out) + ATP + H2O = L-arabinose(in) + ADP + phosphate + H(+). Part of the ABC transporter complex AraFGH involved in arabinose import. Responsible for energy coupling to the transport system. The sequence is that of Arabinose import ATP-binding protein AraG from Pseudomonas syringae pv. syringae (strain B728a).